Consider the following 260-residue polypeptide: 3'-5' ssDNA/RNA exonuclease TatD (260 aa).

A divalent metal cation-binding residues include E91, H127, and H152.

The protein belongs to the metallo-dependent hydrolases superfamily. TatD-type hydrolase family. TatD subfamily. Monomer. Mg(2+) serves as cofactor.

It is found in the cytoplasm. Functionally, 3'-5' exonuclease that prefers single-stranded DNA and RNA. May play a role in the H(2)O(2)-induced DNA damage repair. This is 3'-5' ssDNA/RNA exonuclease TatD from Escherichia fergusonii (strain ATCC 35469 / DSM 13698 / CCUG 18766 / IAM 14443 / JCM 21226 / LMG 7866 / NBRC 102419 / NCTC 12128 / CDC 0568-73).